The chain runs to 41 residues: uncharacterized protein (41 aa).

The chain crosses the membrane as a helical span at residues 10 to 32; it reads LIILAVPFMIKTSLKTNLIFFFL.

Its subcellular location is the cell inner membrane. This is an uncharacterized protein from Escherichia coli (strain K12).